We begin with the raw amino-acid sequence, 86 residues long: RNA-binding protein Hfq (86 aa).

Positions Asp-12–Val-73 constitute a Sm domain.

It belongs to the Hfq family. In terms of assembly, homohexamer.

Functionally, RNA chaperone that binds small regulatory RNA (sRNAs) and mRNAs to facilitate mRNA translational regulation in response to envelope stress, environmental stress and changes in metabolite concentrations. Also binds with high specificity to tRNAs. The protein is RNA-binding protein Hfq of Caldanaerobacter subterraneus subsp. tengcongensis (strain DSM 15242 / JCM 11007 / NBRC 100824 / MB4) (Thermoanaerobacter tengcongensis).